A 412-amino-acid polypeptide reads, in one-letter code: NAD-dependent dihydropyrimidine dehydrogenase subunit PreT (412 aa).

Glu286 contacts NAD(+).

It belongs to the NADH dehydrogenase family. As to quaternary structure, heterotetramer of 2 PreA and 2 PreT subunits.

It catalyses the reaction 5,6-dihydrouracil + NAD(+) = uracil + NADH + H(+). It carries out the reaction 5,6-dihydrothymine + NAD(+) = thymine + NADH + H(+). Functionally, involved in pyrimidine base degradation. Catalyzes physiologically the reduction of uracil to 5,6-dihydrouracil (DHU) by using NADH as a specific cosubstrate. It also catalyzes the reverse reaction and the reduction of thymine to 5,6-dihydrothymine (DHT). The sequence is that of NAD-dependent dihydropyrimidine dehydrogenase subunit PreT (preT) from Escherichia coli O157:H7.